A 756-amino-acid chain; its full sequence is 5-methyltetrahydropteroyltriglutamate--homocysteine methyltransferase (756 aa).

Residues 16–19 (RELK) and lysine 116 contribute to the 5-methyltetrahydropteroyltri-L-glutamate site. L-homocysteine is bound by residues 435 to 437 (IGS) and glutamate 488. L-methionine-binding positions include 435–437 (IGS) and glutamate 488. 5-methyltetrahydropteroyltri-L-glutamate is bound by residues 519–520 (RC) and tryptophan 565. Position 603 (aspartate 603) interacts with L-homocysteine. An L-methionine-binding site is contributed by aspartate 603. Residue glutamate 609 participates in 5-methyltetrahydropteroyltri-L-glutamate binding. 3 residues coordinate Zn(2+): histidine 645, cysteine 647, and glutamate 669. Histidine 698 acts as the Proton donor in catalysis. Cysteine 730 contacts Zn(2+).

The protein belongs to the vitamin-B12 independent methionine synthase family. Requires Zn(2+) as cofactor.

It catalyses the reaction 5-methyltetrahydropteroyltri-L-glutamate + L-homocysteine = tetrahydropteroyltri-L-glutamate + L-methionine. It participates in amino-acid biosynthesis; L-methionine biosynthesis via de novo pathway; L-methionine from L-homocysteine (MetE route): step 1/1. In terms of biological role, catalyzes the transfer of a methyl group from 5-methyltetrahydrofolate to homocysteine resulting in methionine formation. This chain is 5-methyltetrahydropteroyltriglutamate--homocysteine methyltransferase, found in Marinobacter nauticus (strain ATCC 700491 / DSM 11845 / VT8) (Marinobacter aquaeolei).